A 1356-amino-acid chain; its full sequence is MKLFLILLVLPLASCFFTCNSNANLSMLQLGVPDNSSTIVTGLLPTHWFCANQSTSVYSANGFFYIDVGNHRSAFALHTGYYDANQYYIYVTNEIGLNASVTLKICKFSRNTTFDFLSNASSSFDCIVNLLFTEQLGAPLGITISGETVRLHLYNVTRTFYVPAAYKLTKLSVKCYFNYSCVFSVVNATVTVNVTTHNGRVVNYTVCDDCNGYTDNIFSVQQDGRIPNGFPFNNWFLLTNGSTLVDGVSRLYQPLRLTCLWPVPGLKSSTGFVYFNATGSDVNCNGYQHNSVVDVMRYNLNFSANSLDNLKSGVIVFKTLQYDVLFYCSNSSSGVLDTTIPFGPSSQPYYCFINSTINTTHVSTFVGILPPTVREIVVARTGQFYINGFKYFDLGFIEAVNFNVTTASATDFWTVAFATFVDVLVNVSATNIQNLLYCDSPFEKLQCEHLQFGLQDGFYSANFLDDNVLPETYVALPIYYQHTDINFTATASFGGSCYVCKPHQVNISLNGNTSVCVRTSHFSIRYIYNRVKSGSPGDSSWHIYLKSGTCPFSFSKLNNFQKFKTICFSTVEVPGSCNFPLEATWHYTSYTIVGALYVTWSEGNSITGVPYPVSGIREFSNLVLNNCTKYNIYDYVGTGIIRSSNQSLAGGITYVSNSGNLLGFKNVSTGNIFIVTPCNQPDQVAVYQQSIIGAMTAVNESRYGLQNLLQLPNFYYVSNGGNNCTTAVMTYSNFGICADGSLIPVRPRNSSDNGISAIITANLSIPSNWTTSVQVEYLQITSTPIVVDCATYVCNGNPRCKNLLKQYTSACKTIEDALRLSAHLETNDVSSMLTFDSNAFSLANVTSFGDYNLSSVLPQRNIRSSRIAGRSALEDLLFSKVVTSGLGTVDVDYKSCTKGLSIADLACAQYYNGIMVLPGVADAERMAMYTGSLIGGMVLGGLTSAAAIPFSLALQARLNYVALQTDVLQENQKILAASFNKAINNIVASFSSVNDAITQTAEAIHTVTIALNKIQDVVNQQGSALNHLTSQLRHNFQAISNSIQAIYDRLDSIQADQQVDRLITGRLAALNAFVSQVLNKYTEVRGSRRLAQQKINECVKSQSNRYGFCGNGTHIFSIVNSAPDGLLFLHTVLLPTDYKNVKAWSGICVDGIYGYVLRQPNLVLYSDNGVFRVTSRVMFQPRLPVLSDFVQIYNCNVTFVNISRVELHTVIPDYVDVNKTLQEFAQNLPKYVKPNFDLTPFNLTYLNLSSELKQLEAKTASLFQTTVELQGLIDQINSTYVDLKLLNRFENYIKWPWWVWLIISVVFVVLLSLLVFCCLSTGCCGCCNCLTSSMRGCCDCGSTKLPYYEFEKVHVQ.

An N-terminal signal peptide occupies residues M1–T18. 2 S1 regions span residues F16 to V717 and C19 to V717. The Virion surface segment spans residues C19–P1296. N-linked (GlcNAc) asparagine; by host glycosylation is found at N35, N52, and N98. Residues C106 and C126 are joined by a disulfide bond. N155 carries N-linked (GlcNAc) asparagine; by host glycosylation. Cysteines 175 and 181 form a disulfide. N-linked (GlcNAc) asparagine; by host glycans are attached at residues N187 and N193. C207 and C210 are disulfide-bonded. N240, N276, N301, N330, N354, N358, N403, and N426 each carry an N-linked (GlcNAc) asparagine; by host glycan. A disulfide bond links C259 and C284. C328 and C351 form a disulfide bridge. Residues C438 and C447 are joined by a disulfide bond. N486 is a glycosylation site (N-linked (GlcNAc...) asparagine; by host). C497 and C500 are oxidised to a cystine. An N-linked (GlcNAc) asparagine; by host glycan is attached at N506. A glycan (N-linked (GlcNAc...) asparagine; by host) is linked at N512. 2 disulfides stabilise this stretch: C516–C567 and C550–C577. Residues V598 to V728 are interaction with host ANPEP. N-linked (GlcNAc) asparagine; by host glycosylation is found at N626, N645, N666, N699, and N723. C627 and C678 are joined by a disulfide. Positions S718 to Q1356 are S2. A disulfide bridge connects residues C724 and C737. 3 N-linked (GlcNAc) asparagine; by host glycosylation sites follow: N749, N762, and N768. Intrachain disulfides connect C789-C811, C794-C800, and C896-C907. The tract at residues I934–L954 is fusion peptide. The heptad repeat 1 (HR1) stretch occupies residues I948–L1067. The stretch at Q1015–V1059 forms a coiled coil. A disulfide bridge links C1098 with C1109. Residues N1111, N1196, N1201, N1218, N1242, N1247, and N1277 are each glycosylated (N-linked (GlcNAc) asparagine; by host). Residues P1212–V1308 are heptad repeat 2 (HR2). Residues T1244 to L1286 are a coiled coil. Residues W1297–F1316 form a helical membrane-spanning segment. Topologically, residues C1317–Q1356 are intravirion. The KxHxx motif lies at K1352–Q1356.

It belongs to the alphacoronaviruses spike protein family. As to quaternary structure, homotrimer. During virus morphogenesis, found in a complex with M proteins. Interacts with host ACE2. In terms of processing, glycosylated by host with heterogeneous N-linked glycans protruding from the trimer surface. Highly glycosylated by host, occluding many regions across the surface of the protein.

Its subcellular location is the virion membrane. It localises to the host endoplasmic reticulum-Golgi intermediate compartment membrane. Functionally, S1 region attaches the virion to the cell membrane by interacting with host ACE2, initiating the infection. Binding to the receptor probably induces conformational changes in the S glycoprotein unmasking the fusion peptide and activating membranes fusion. S2 region belongs to the class I viral fusion protein. Under the current model, the protein has at least 3 conformational states: pre-fusion native state, pre-hairpin intermediate state, and post-fusion hairpin state. During viral and target cell membrane fusion, the coiled coil regions (heptad repeats) regions assume a trimer-of-hairpins structure, positioning the fusion peptide in close proximity to the C-terminal region of the ectodomain. The formation of this structure appears to drive apposition and subsequent fusion of viral and target cell membranes. The polypeptide is Spike glycoprotein (Human coronavirus NL63 (HCoV-NL63)).